Consider the following 603-residue polypeptide: Golgin subfamily A member 8B (603 aa).

4 disordered regions span residues 1–82 (MAEE…NSRS), 95–125 (LKQQ…ELEG), 398–419 (TSAE…ESSG), and 460–492 (PGDS…GAAG). Residues 46–66 (AASGGCHSSEASSSASSSLHA) are compositionally biased toward low complexity. Positions 69–82 (SPCQEQAAVLNSRS) are enriched in polar residues. Coiled coils occupy residues 82-173 (SIKI…GELE) and 212-440 (LKGH…LELG). The segment covering 100-124 (KQVEHQLEEEKKANNEKQKAERELE) has biased composition (basic and acidic residues). Residues 469 to 482 (PGGGHHQAGPGQGG) show a composition bias toward gly residues. A golgi-targeting domain region spans residues 491–603 (AGDGVAACGS…CWAWLPRRRR (113 aa)).

Belongs to the GOLGA8 family. Highly expressed in brain, heart and kidney. Detected at lower levels in liver, thymus, spleen, lung and peripheral blood leukocytes.

The protein resides in the golgi apparatus. It is found in the golgi stack membrane. Functionally, may be involved in maintaining Golgi structure. The protein is Golgin subfamily A member 8B (GOLGA8B) of Homo sapiens (Human).